Reading from the N-terminus, the 366-residue chain is Flagellar P-ring protein (366 aa).

The first 20 residues, 1–20 (MVIKFLSALILLLVTTAAQA), serve as a signal peptide directing secretion.

This sequence belongs to the FlgI family. As to quaternary structure, the basal body constitutes a major portion of the flagellar organelle and consists of four rings (L,P,S, and M) mounted on a central rod.

It localises to the periplasm. The protein resides in the bacterial flagellum basal body. Assembles around the rod to form the L-ring and probably protects the motor/basal body from shearing forces during rotation. The polypeptide is Flagellar P-ring protein (Escherichia coli O1:K1 / APEC).